Reading from the N-terminus, the 608-residue chain is Pentatricopeptide repeat-containing protein 1, apicoplast (608 aa).

PPR repeat units follow at residues 165–199 (TTLA…NIKP), 200–230 (DLVS…MIES), 236–270 (NYEI…PFVE), 336–370 (QYSE…GKYM), 372–402 (SIFV…LKND), 410–445 (NVNI…LLTP), and 446–480 (NNLS…KLLN).

The protein belongs to the PPR family. P subfamily. In terms of assembly, homodimer.

It localises to the plastid. The protein resides in the apicoplast. In terms of biological role, binds to apicoplast RNA transcripts, preferentially to the motif UUAU, and protects RNA transcripts from degradation by ribonuclease. In Plasmodium falciparum (isolate 3D7), this protein is Pentatricopeptide repeat-containing protein 1, apicoplast.